The chain runs to 267 residues: Phosphonoacetaldehyde hydrolase (267 aa).

Catalysis depends on D10, which acts as the Nucleophile. Mg(2+) is bound by residues D10 and A12. Residue K51 is the Schiff-base intermediate with substrate of the active site. Residue D184 participates in Mg(2+) binding.

This sequence belongs to the HAD-like hydrolase superfamily. PhnX family. Homodimer. Mg(2+) serves as cofactor.

It catalyses the reaction phosphonoacetaldehyde + H2O = acetaldehyde + phosphate + H(+). Its function is as follows. Involved in phosphonate degradation. This chain is Phosphonoacetaldehyde hydrolase, found in Paraburkholderia phytofirmans (strain DSM 17436 / LMG 22146 / PsJN) (Burkholderia phytofirmans).